The sequence spans 224 residues: Synaptogyrin-2 (224 aa).

Methionine 1 carries the post-translational modification N-acetylmethionine. Serine 3 is modified (phosphoserine). Residues 20–171 (YVSQPQVVTR…LASLAYQRYK (152 aa)) enclose the MARVEL domain. A run of 4 helical transmembrane segments spans residues 30-50 (LVSM…GYIN), 73-93 (AIGV…AFFS), 105-125 (VIGD…GFCF), and 147-167 (AAIT…SLAY).

The protein belongs to the synaptogyrin family. In terms of processing, may be tyrosine phosphorylated by Src. In terms of tissue distribution, ubiquitously expressed with lower expression in brain (at protein level).

The protein resides in the cytoplasmic vesicle membrane. It localises to the cytoplasmic vesicle. The protein localises to the secretory vesicle. Its subcellular location is the synaptic vesicle membrane. Its function is as follows. May play a role in regulated exocytosis. In neuronal cells, modulates the localization of synaptophysin/SYP into synaptic-like microvesicles and may therefore play a role in the formation and/or the maturation of this vesicles. May also play a role in GLUT4 storage and transport to the plasma membrane. The chain is Synaptogyrin-2 from Rattus norvegicus (Rat).